Consider the following 227-residue polypeptide: Flagellar L-ring protein (227 aa).

An N-terminal signal peptide occupies residues 1 to 15 (MRTWAVLPILLMLVG). Cys-16 carries the N-palmitoyl cysteine lipid modification. Cys-16 is lipidated: S-diacylglycerol cysteine.

Belongs to the FlgH family. In terms of assembly, the basal body constitutes a major portion of the flagellar organelle and consists of four rings (L,P,S, and M) mounted on a central rod.

The protein resides in the cell outer membrane. The protein localises to the bacterial flagellum basal body. Functionally, assembles around the rod to form the L-ring and probably protects the motor/basal body from shearing forces during rotation. This Syntrophotalea carbinolica (strain DSM 2380 / NBRC 103641 / GraBd1) (Pelobacter carbinolicus) protein is Flagellar L-ring protein.